Here is a 293-residue protein sequence, read N- to C-terminus: ELMO domain-containing protein 2 (293 aa).

The ELMO domain occupies 126-282 (QHEKLLIKLW…KFHEKIKGLL (157 aa)).

In terms of biological role, acts as a GTPase-activating protein (GAP) toward guanine nucleotide exchange factors like ARL2, ARL3, ARF1 and ARF6, but not for GTPases outside the Arf family. The protein is ELMO domain-containing protein 2 (ELMOD2) of Bos taurus (Bovine).